A 601-amino-acid chain; its full sequence is NADH-quinone oxidoreductase subunit C/D (601 aa).

Residues methionine 1 to glutamate 192 form an NADH dehydrogenase I subunit C region. The tract at residues aspartate 216–arginine 601 is NADH dehydrogenase I subunit D.

This sequence in the N-terminal section; belongs to the complex I 30 kDa subunit family. In the C-terminal section; belongs to the complex I 49 kDa subunit family. In terms of assembly, NDH-1 is composed of 13 different subunits. Subunits NuoB, CD, E, F, and G constitute the peripheral sector of the complex.

The protein resides in the cell inner membrane. The catalysed reaction is a quinone + NADH + 5 H(+)(in) = a quinol + NAD(+) + 4 H(+)(out). In terms of biological role, NDH-1 shuttles electrons from NADH, via FMN and iron-sulfur (Fe-S) centers, to quinones in the respiratory chain. The immediate electron acceptor for the enzyme in this species is believed to be ubiquinone. Couples the redox reaction to proton translocation (for every two electrons transferred, four hydrogen ions are translocated across the cytoplasmic membrane), and thus conserves the redox energy in a proton gradient. In Gluconacetobacter diazotrophicus (strain ATCC 49037 / DSM 5601 / CCUG 37298 / CIP 103539 / LMG 7603 / PAl5), this protein is NADH-quinone oxidoreductase subunit C/D.